Consider the following 363-residue polypeptide: Type-2 angiotensin II receptor (363 aa).

Topologically, residues 1-45 are extracellular; it reads MKDNFSFAATSRNITSSLPFVNLNMSGTNDLIFNCSHKPSDKHLE. Residues Asn4, Asn13, Asn24, and Asn34 are each glycosylated (N-linked (GlcNAc...) asparagine). Cystine bridges form between Cys35–Cys290 and Cys117–Cys195. Residues 46-70 traverse the membrane as a helical segment; that stretch reads AIPVLYYLIFVIGFAVNIIVVSLFC. Topologically, residues 71 to 80 are cytoplasmic; that stretch reads CQKGPKKVSS. The chain crosses the membrane as a helical span at residues 81–104; that stretch reads IYIFNLAVADLLLLATLPLWATYY. Angiotensin II-binding residues include Tyr103 and Tyr104. The Extracellular segment spans residues 105 to 114; the sequence is SYRYDWLFGP. Residues 115–140 traverse the membrane as a helical segment; that stretch reads VMCKVFGSFLTLNMFASIFFITCMSV. The Cytoplasmic segment spans residues 141-159; it reads DRYQSVIYPFLSQRRNPWQ. Residues 160–181 traverse the membrane as a helical segment; that stretch reads ASYVVPLVWCMACLSSLPTFYF. Residues Arg182, Tyr204, and Lys215 each coordinate angiotensin II. The Extracellular segment spans residues 182 to 206; it reads RDVRTIEYLGVNACVMAFPPEKYAQ. A helical transmembrane segment spans residues 207–232; sequence WSAGIALMKNVLGFIIPLIFIATCYF. The Cytoplasmic portion of the chain corresponds to 233-257; it reads GIRKHLLKTNSYGKNRITRDQVLKM. Residues 258 to 281 traverse the membrane as a helical segment; that stretch reads AAAVVLAFIICWLPFHVLTFLDAL. Angiotensin II is bound at residue Asp279. Residues 282–294 are Extracellular-facing; it reads SWMGIINSCEVMA. Residues 295–320 form a helical membrane-spanning segment; it reads VIDLALPFAILLGFTNSCVNPFLYCF. An angiotensin II-binding site is contributed by Asp297. Topologically, residues 321-363 are cytoplasmic; the sequence is VGNRFQQKLRSMFRVPITWLQGKRETMSCRKSSSLREMDTFVS. Positions 324–333 are helix VIII; that stretch reads RFQQKLRSMF. At Ser354 the chain carries Phosphoserine; by PKC.

Belongs to the G-protein coupled receptor 1 family. Interacts with MTUS1.

Its subcellular location is the cell membrane. Receptor for angiotensin II, a vasoconstricting peptide. Signals primarily via a non-canonical G-protein- and beta-arrestin independent pathways. Cooperates with MTUS1 to inhibit ERK2 activation and cell proliferation. This is Type-2 angiotensin II receptor (AGTR2) from Meriones unguiculatus (Mongolian jird).